Reading from the N-terminus, the 339-residue chain is Protein RecA (339 aa).

ATP is bound at residue 74 to 81 (GPESSGKT).

Belongs to the RecA family.

The protein resides in the cytoplasm. Can catalyze the hydrolysis of ATP in the presence of single-stranded DNA, the ATP-dependent uptake of single-stranded DNA by duplex DNA, and the ATP-dependent hybridization of homologous single-stranded DNAs. It interacts with LexA causing its activation and leading to its autocatalytic cleavage. This is Protein RecA from Phytoplasma mali (strain AT).